A 208-amino-acid polypeptide reads, in one-letter code: Uracil phosphoribosyltransferase (208 aa).

5-phospho-alpha-D-ribose 1-diphosphate is bound by residues Arg-78, Arg-103, and 130–138; that span reads DPMLATGGS. Uracil contacts are provided by residues Ile-193 and 198 to 200; that span reads GDA. Residue Asp-199 coordinates 5-phospho-alpha-D-ribose 1-diphosphate.

Belongs to the UPRTase family. Requires Mg(2+) as cofactor.

It catalyses the reaction UMP + diphosphate = 5-phospho-alpha-D-ribose 1-diphosphate + uracil. The protein operates within pyrimidine metabolism; UMP biosynthesis via salvage pathway; UMP from uracil: step 1/1. With respect to regulation, allosterically activated by GTP. Catalyzes the conversion of uracil and 5-phospho-alpha-D-ribose 1-diphosphate (PRPP) to UMP and diphosphate. This Shewanella sediminis (strain HAW-EB3) protein is Uracil phosphoribosyltransferase.